Here is a 133-residue protein sequence, read N- to C-terminus: ATP synthase epsilon chain (133 aa).

This sequence belongs to the ATPase epsilon chain family. As to quaternary structure, F-type ATPases have 2 components, CF(1) - the catalytic core - and CF(0) - the membrane proton channel. CF(1) has five subunits: alpha(3), beta(3), gamma(1), delta(1), epsilon(1). CF(0) has three main subunits: a, b and c.

The protein localises to the cell membrane. Functionally, produces ATP from ADP in the presence of a proton gradient across the membrane. This chain is ATP synthase epsilon chain, found in Bacillus cytotoxicus (strain DSM 22905 / CIP 110041 / 391-98 / NVH 391-98).